Here is a 347-residue protein sequence, read N- to C-terminus: NADH-quinone oxidoreductase subunit H (347 aa).

Helical transmembrane passes span 13–33 (IIMIGQSLLLLVCLLVFIAYV), 50–70 (PNVVGPFGLFQSFADLLKFVF), 82–102 (AVFLLAPLVTVLLALSTWAVV), 115–135 (VGILYIFAISSLEVYGIIMGG), 161–181 (IGFVIVTVLLCVGSLNLTDIV), 198–218 (FLDWHWLSLFPMFIIFFISAL), 263–283 (CSLTTILFLGGWLPPVDIWIL), 286–306 (VPGIIWFMLKACFVFFMFAMV), and 321–341 (LGWKVFLPLSLAMVIIVAFVL).

The protein belongs to the complex I subunit 1 family. NDH-1 is composed of 14 different subunits. Subunits NuoA, H, J, K, L, M, N constitute the membrane sector of the complex.

It is found in the cell inner membrane. It catalyses the reaction a quinone + NADH + 5 H(+)(in) = a quinol + NAD(+) + 4 H(+)(out). Its function is as follows. NDH-1 shuttles electrons from NADH, via FMN and iron-sulfur (Fe-S) centers, to quinones in the respiratory chain. The immediate electron acceptor for the enzyme in this species is believed to be ubiquinone. Couples the redox reaction to proton translocation (for every two electrons transferred, four hydrogen ions are translocated across the cytoplasmic membrane), and thus conserves the redox energy in a proton gradient. This subunit may bind ubiquinone. This Rhizobium leguminosarum bv. trifolii (strain WSM2304) protein is NADH-quinone oxidoreductase subunit H.